The primary structure comprises 149 residues: Calmodulin (149 aa).

Ala2 bears the N-acetylalanine mark. 4 EF-hand domains span residues Glu8–Asn43, Pro44–Asp79, Asp81–Lys116, and Leu117–Lys149. The Ca(2+) site is built by Asp21, Asp23, Asp25, Thr27, Glu32, Asp57, Asp59, Asn61, Thr63, Glu68, Asp94, Asp96, Asn98, and Glu105. Lys116 is subject to N6,N6,N6-trimethyllysine. 5 residues coordinate Ca(2+): Asp130, Asp132, Asp134, Gln136, and Glu141.

It belongs to the calmodulin family.

Its function is as follows. Calmodulin mediates the control of a large number of enzymes, ion channels and other proteins by Ca(2+). Among the enzymes to be stimulated by the calmodulin-Ca(2+) complex are a number of protein kinases and phosphatases. The protein is Calmodulin of Heterocapsa triquetra (Dinoflagellate).